The following is a 356-amino-acid chain: Glycerol-1-phosphate dehydrogenase [NAD(P)+] (356 aa).

Residues 103-107 (GRSID) and 125-128 (TAAS) each bind NAD(+). Asp-130 contributes to the substrate binding site. Ser-134 is a binding site for NAD(+). Asp-177 is a binding site for substrate. Positions 177 and 257 each coordinate Zn(2+). His-261 serves as a coordination point for substrate. His-273 is a Zn(2+) binding site.

It belongs to the glycerol-1-phosphate dehydrogenase family. Zn(2+) serves as cofactor.

It is found in the cytoplasm. It catalyses the reaction sn-glycerol 1-phosphate + NAD(+) = dihydroxyacetone phosphate + NADH + H(+). The enzyme catalyses sn-glycerol 1-phosphate + NADP(+) = dihydroxyacetone phosphate + NADPH + H(+). It functions in the pathway membrane lipid metabolism; glycerophospholipid metabolism. Catalyzes the NAD(P)H-dependent reduction of dihydroxyacetonephosphate (DHAP or glycerone phosphate) to glycerol 1-phosphate (G1P). The G1P thus generated is used as the glycerophosphate backbone of phospholipids in the cellular membranes of Archaea. This chain is Glycerol-1-phosphate dehydrogenase [NAD(P)+], found in Methanosarcina barkeri (strain Fusaro / DSM 804).